We begin with the raw amino-acid sequence, 461 residues long: Argininosuccinate lyase (461 aa).

The protein belongs to the lyase 1 family. Argininosuccinate lyase subfamily.

It localises to the cytoplasm. It carries out the reaction 2-(N(omega)-L-arginino)succinate = fumarate + L-arginine. The protein operates within amino-acid biosynthesis; L-arginine biosynthesis; L-arginine from L-ornithine and carbamoyl phosphate: step 3/3. Its activity is regulated as follows. Strongly inhibited by L-arginine. Inhibitory effects are lowered at pH 7.0 compared to those at pH 8.0. At 42 degrees Celsius and pH 8.0, activity decreases to 77% and 25% in the presence of 1 mM and 10 mM arginine, respectively. The other amino and organic acids do not affect activity. Catalyzes the last step of arginine biosynthesis, the conversion of argininosuccinate into L-arginine and fumarate. The sequence is that of Argininosuccinate lyase from Nostoc sp. (strain PCC 7120 / SAG 25.82 / UTEX 2576).